We begin with the raw amino-acid sequence, 592 residues long: Ferric-chelate reductase 1 (592 aa).

A helical transmembrane segment spans residues 2–22 (AAPQITLSVLVIALLTCSVTA). Residues 13–179 (IALLTCSVTA…FTTPKATTQP (167 aa)) form the Reelin domain. Residues Asn-85, Asn-308, Asn-321, and Asn-353 are each glycosylated (N-linked (GlcNAc...) asparagine). Positions 216-331 (EPACVFLSFT…ESYYIFFAEG (116 aa)) constitute a DOMON domain. One can recognise a Cytochrome b561 domain in the interval 335 to 534 (DGRIFRHSQQ…IGTEVILEIH (200 aa)). The helical transmembrane segment at 372–392 (AHGALMFVAWMTTVSIGVLVA) threads the bilayer. His-373 and His-414 together coordinate heme b. 5 consecutive transmembrane segments (helical) span residues 415–435 (RMLM…PFVY), 446–466 (HPYL…LATF), 477–499 (VFNW…AMFL), 515–535 (YAMM…EIHA), and 569–589 (VVLA…LSAI). Residues His-446 and His-482 each contribute to the heme b site.

The protein belongs to the FRRS1 family. It depends on heme b as a cofactor. Expressed in spleen, liver and kidney with low expression in brain. Localizes in adult brain to the choroid plexus of the fourth, third, and lateral ventricles and to ependymal cells that line the ventricles.

The protein resides in the membrane. Its function is as follows. Ferric-chelate reductases reduce Fe(3+) to Fe(2+) before its transport from the endosome to the cytoplasm. The sequence is that of Ferric-chelate reductase 1 (FRRS1) from Mus musculus (Mouse).